The sequence spans 225 residues: Enolase-phosphatase E1 (225 aa).

It belongs to the HAD-like hydrolase superfamily. MasA/MtnC family. In terms of assembly, monomer. Mg(2+) is required as a cofactor.

The catalysed reaction is 5-methylsulfanyl-2,3-dioxopentyl phosphate + H2O = 1,2-dihydroxy-5-(methylsulfanyl)pent-1-en-3-one + phosphate. Its pathway is amino-acid biosynthesis; L-methionine biosynthesis via salvage pathway; L-methionine from S-methyl-5-thio-alpha-D-ribose 1-phosphate: step 3/6. The protein operates within amino-acid biosynthesis; L-methionine biosynthesis via salvage pathway; L-methionine from S-methyl-5-thio-alpha-D-ribose 1-phosphate: step 4/6. Bifunctional enzyme that catalyzes the enolization of 2,3-diketo-5-methylthiopentyl-1-phosphate (DK-MTP-1-P) into the intermediate 2-hydroxy-3-keto-5-methylthiopentenyl-1-phosphate (HK-MTPenyl-1-P), which is then dephosphorylated to form the acireductone 1,2-dihydroxy-3-keto-5-methylthiopentene (DHK-MTPene). This chain is Enolase-phosphatase E1, found in Shewanella woodyi (strain ATCC 51908 / MS32).